The sequence spans 103 residues: MQNQRIRIRLKAFDHKLIDASTQEIVETAKRTGAQVRGPIPLPTRKERFTVLISPHVNKDARDQYEIRTHKRLLDIVEPTEKTVDALMKLDLAAGVEVQISLG.

The protein belongs to the universal ribosomal protein uS10 family. In terms of assembly, part of the 30S ribosomal subunit.

Functionally, involved in the binding of tRNA to the ribosomes. The chain is Small ribosomal subunit protein uS10 from Cellvibrio japonicus (strain Ueda107) (Pseudomonas fluorescens subsp. cellulosa).